The following is a 179-amino-acid chain: Sodium/potassium-transporting ATPase subunit beta-1-interacting protein 3 (179 aa).

A run of 4 helical transmembrane segments spans residues 5–22 (TGRC…LVAL), 35–55 (APIL…FGTI), 62–82 (IVAY…IICF), and 151–171 (AVQI…ISVI).

It belongs to the NKAIN family. Interacts with atp1b1 C-terminus.

Its subcellular location is the cell membrane. This is Sodium/potassium-transporting ATPase subunit beta-1-interacting protein 3 (nkain3) from Xenopus laevis (African clawed frog).